The primary structure comprises 299 residues: Acetylglutamate kinase (299 aa).

Residues 70-71, Arg-92, and Asn-186 contribute to the substrate site; that span reads GG.

It belongs to the acetylglutamate kinase family. ArgB subfamily.

The protein localises to the cytoplasm. It carries out the reaction N-acetyl-L-glutamate + ATP = N-acetyl-L-glutamyl 5-phosphate + ADP. It participates in amino-acid biosynthesis; L-arginine biosynthesis; N(2)-acetyl-L-ornithine from L-glutamate: step 2/4. Its function is as follows. Catalyzes the ATP-dependent phosphorylation of N-acetyl-L-glutamate. In Thermoanaerobacter pseudethanolicus (strain ATCC 33223 / 39E) (Clostridium thermohydrosulfuricum), this protein is Acetylglutamate kinase.